A 107-amino-acid polypeptide reads, in one-letter code: UPF0213 protein SG0387 (107 aa).

The region spanning 4–79 (SLWHLYLIRT…KQLSRAQKEH (76 aa)) is the GIY-YIG domain.

Belongs to the UPF0213 family.

This Sodalis glossinidius (strain morsitans) protein is UPF0213 protein SG0387.